Reading from the N-terminus, the 435-residue chain is Elongation factor 1-alpha (435 aa).

The 226-residue stretch at 6–231 (KVHINLVVIG…DALEPPKRPV (226 aa)) folds into the tr-type G domain. Positions 15–22 (GHVDSGKS) are G1. A GTP-binding site is contributed by 15-22 (GHVDSGKS). The segment at 71–75 (GITID) is G2. The interval 92-95 (DAPG) is G3. GTP contacts are provided by residues 92–96 (DAPGH) and 154–157 (NKMD). The tract at residues 154 to 157 (NKMD) is G4. Residues 195-197 (SGF) are G5.

It belongs to the TRAFAC class translation factor GTPase superfamily. Classic translation factor GTPase family. EF-Tu/EF-1A subfamily.

The protein resides in the cytoplasm. This protein promotes the GTP-dependent binding of aminoacyl-tRNA to the A-site of ribosomes during protein biosynthesis. In Tetrahymena pyriformis, this protein is Elongation factor 1-alpha.